A 262-amino-acid chain; its full sequence is Hydroxyethylthiazole kinase (262 aa).

Met43 lines the substrate pocket. Residues Arg118 and Thr164 each coordinate ATP. Ala191 contributes to the substrate binding site.

This sequence belongs to the Thz kinase family. Mg(2+) serves as cofactor.

It carries out the reaction 5-(2-hydroxyethyl)-4-methylthiazole + ATP = 4-methyl-5-(2-phosphooxyethyl)-thiazole + ADP + H(+). It functions in the pathway cofactor biosynthesis; thiamine diphosphate biosynthesis; 4-methyl-5-(2-phosphoethyl)-thiazole from 5-(2-hydroxyethyl)-4-methylthiazole: step 1/1. Functionally, catalyzes the phosphorylation of the hydroxyl group of 4-methyl-5-beta-hydroxyethylthiazole (THZ). This Cereibacter sphaeroides (strain KD131 / KCTC 12085) (Rhodobacter sphaeroides) protein is Hydroxyethylthiazole kinase.